A 237-amino-acid chain; its full sequence is Probable transcriptional regulatory protein Fjoh_2560 (237 aa).

Belongs to the TACO1 family.

The protein resides in the cytoplasm. The chain is Probable transcriptional regulatory protein Fjoh_2560 from Flavobacterium johnsoniae (strain ATCC 17061 / DSM 2064 / JCM 8514 / BCRC 14874 / CCUG 350202 / NBRC 14942 / NCIMB 11054 / UW101) (Cytophaga johnsonae).